The chain runs to 639 residues: Probable potassium transport system protein Kup 1 (639 aa).

Transmembrane regions (helical) follow at residues Ala27–Phe47, Val64–Ile84, Val115–Pro135, Pro151–Ile171, Phe182–Ile202, Gly225–Leu245, Trp261–Leu281, Leu293–Ile313, Ile351–Phe371, Leu377–Phe397, Ile408–Ala428, and Leu430–Ile450.

It belongs to the HAK/KUP transporter (TC 2.A.72) family.

Its subcellular location is the cell inner membrane. The enzyme catalyses K(+)(in) + H(+)(in) = K(+)(out) + H(+)(out). Its function is as follows. Transport of potassium into the cell. Likely operates as a K(+):H(+) symporter. In Agrobacterium fabrum (strain C58 / ATCC 33970) (Agrobacterium tumefaciens (strain C58)), this protein is Probable potassium transport system protein Kup 1.